A 153-amino-acid chain; its full sequence is UPF0235 protein C15orf40 (153 aa).

Residues 1–12 (MLRLRSGLRHLR) show a composition bias toward basic residues. The disordered stretch occupies residues 1-55 (MLRLRSGLRHLRATPNTRGSARLLCAEMPKKAGATTKGKSQSKEPERPLPPLGPV). Phosphoserine is present on serine 116.

This sequence belongs to the UPF0235 family.

This chain is UPF0235 protein C15orf40 (C15orf40), found in Homo sapiens (Human).